Consider the following 94-residue polypeptide: Small ribosomal subunit protein bS18 (94 aa).

Belongs to the bacterial ribosomal protein bS18 family. In terms of assembly, part of the 30S ribosomal subunit. Forms a tight heterodimer with protein bS6.

Its function is as follows. Binds as a heterodimer with protein bS6 to the central domain of the 16S rRNA, where it helps stabilize the platform of the 30S subunit. This chain is Small ribosomal subunit protein bS18, found in Polaromonas sp. (strain JS666 / ATCC BAA-500).